Consider the following 403-residue polypeptide: MIHQPPAGARDLLPLEVVQKAWINDTLQQVFGQWGYQRIVTSTIERLDTLKAGGAIEDETVIQLHNNSREQLGLRPELTASVARAAVTRMANTSYPQRLCYRANVFRNPPSGHHGRQLEFYQAGVELLFSGGTLADAEILLLVAECLQKLQIPSWYLILGDAGLTRSLLSPFPEALRQEVRHCLATLDYVKLDNLSYPNEELKHRASLLFNLRGKPEDVLSKVVDLTLDQTGKHCLNNLKSLIELVNHSTSYKLPLTLDLSLIQTFDYYTGIIFKAIGQTNHKLQNLGQGGRYDQLLGVYHPQKKSAPGIGFSLNVGALHRCLLSTDILPQKPLLIDYLVVAKTSESQIEALKYAQQLRKDDNSLRVTIDLENRNEEEIKKYAQENGIKTIVWIEKGKEAIIN.

It belongs to the class-II aminoacyl-tRNA synthetase family. HisZ subfamily. As to quaternary structure, heteromultimer composed of HisG and HisZ subunits.

Its subcellular location is the cytoplasm. It participates in amino-acid biosynthesis; L-histidine biosynthesis; L-histidine from 5-phospho-alpha-D-ribose 1-diphosphate: step 1/9. Required for the first step of histidine biosynthesis. May allow the feedback regulation of ATP phosphoribosyltransferase activity by histidine. This Crocosphaera subtropica (strain ATCC 51142 / BH68) (Cyanothece sp. (strain ATCC 51142)) protein is ATP phosphoribosyltransferase regulatory subunit.